Consider the following 105-residue polypeptide: Acylphosphatase (105 aa).

The Acylphosphatase-like domain maps to 16 to 105; that stretch reads RLTAWVRGRV…RGGYSGFTQA (90 aa). Residues arginine 31 and asparagine 49 contribute to the active site.

It belongs to the acylphosphatase family.

The catalysed reaction is an acyl phosphate + H2O = a carboxylate + phosphate + H(+). This is Acylphosphatase (acyP) from Acidothermus cellulolyticus (strain ATCC 43068 / DSM 8971 / 11B).